We begin with the raw amino-acid sequence, 735 residues long: 1,4-alpha-glucan branching enzyme GlgB (735 aa).

The active-site Nucleophile is the D414. E469 (proton donor) is an active-site residue.

Belongs to the glycosyl hydrolase 13 family. GlgB subfamily. Monomer.

The enzyme catalyses Transfers a segment of a (1-&gt;4)-alpha-D-glucan chain to a primary hydroxy group in a similar glucan chain.. It participates in glycan biosynthesis; glycogen biosynthesis. Catalyzes the formation of the alpha-1,6-glucosidic linkages in glycogen by scission of a 1,4-alpha-linked oligosaccharide from growing alpha-1,4-glucan chains and the subsequent attachment of the oligosaccharide to the alpha-1,6 position. The chain is 1,4-alpha-glucan branching enzyme GlgB from Burkholderia lata (strain ATCC 17760 / DSM 23089 / LMG 22485 / NCIMB 9086 / R18194 / 383).